A 316-amino-acid polypeptide reads, in one-letter code: Biotin synthase (316 aa).

A Radical SAM core domain is found at 36–264 (FDNRITLCAI…TATLRICGGR (229 aa)). Residues cysteine 53, cysteine 57, and cysteine 60 each coordinate [4Fe-4S] cluster. Residues cysteine 129, cysteine 189, and arginine 259 each coordinate [2Fe-2S] cluster.

Belongs to the radical SAM superfamily. Biotin synthase family. As to quaternary structure, homodimer. It depends on [4Fe-4S] cluster as a cofactor. Requires [2Fe-2S] cluster as cofactor.

The enzyme catalyses (4R,5S)-dethiobiotin + (sulfur carrier)-SH + 2 reduced [2Fe-2S]-[ferredoxin] + 2 S-adenosyl-L-methionine = (sulfur carrier)-H + biotin + 2 5'-deoxyadenosine + 2 L-methionine + 2 oxidized [2Fe-2S]-[ferredoxin]. The protein operates within cofactor biosynthesis; biotin biosynthesis; biotin from 7,8-diaminononanoate: step 2/2. Its function is as follows. Catalyzes the conversion of dethiobiotin (DTB) to biotin by the insertion of a sulfur atom into dethiobiotin via a radical-based mechanism. The chain is Biotin synthase from Desulfovibrio desulfuricans (strain ATCC 27774 / DSM 6949 / MB).